Here is a 170-residue protein sequence, read N- to C-terminus: Peptide deformylase (170 aa).

Fe cation-binding residues include Cys94 and His136. Glu137 is an active-site residue. A Fe cation-binding site is contributed by His140.

This sequence belongs to the polypeptide deformylase family. Fe(2+) serves as cofactor.

The enzyme catalyses N-terminal N-formyl-L-methionyl-[peptide] + H2O = N-terminal L-methionyl-[peptide] + formate. In terms of biological role, removes the formyl group from the N-terminal Met of newly synthesized proteins. Requires at least a dipeptide for an efficient rate of reaction. N-terminal L-methionine is a prerequisite for activity but the enzyme has broad specificity at other positions. In Wolinella succinogenes (strain ATCC 29543 / DSM 1740 / CCUG 13145 / JCM 31913 / LMG 7466 / NCTC 11488 / FDC 602W) (Vibrio succinogenes), this protein is Peptide deformylase.